Consider the following 1471-residue polypeptide: Myosin-4 (1471 aa).

Residues 4–57 (EVGTKCWYPHKEQGWIGGEVTKNDFFEGTFHLELKLEDGETVSIETNSFENDDD) enclose the Myosin N-terminal SH3-like domain. Residues 71-777 (ESTDDLTTLS…MLAFLEKLRT (707 aa)) enclose the Myosin motor domain. 165–172 (GESGAGKT) provides a ligand contact to ATP. An actin-binding region spans residues 647–669 (LGELMAIINSTNVHYIRCIKPNS). 5 consecutive IQ domains span residues 781-801 (NEIC…LQYL), 804-824 (MESI…TRVD), 829-849 (TRAA…EYYR), 876-898 (MLMA…DYRT), and 899-928 (LKRS…EVEE). Residues 938–1063 (GLLEEAIEFK…LAFIENVIAQ (126 aa)) are a coiled coil. In terms of domain architecture, Dilute spans 1164–1419 (SKVLLTVESI…LNYLANVIKR (256 aa)).

It belongs to the TRAFAC class myosin-kinesin ATPase superfamily. Myosin family. As to quaternary structure, interacts with SHE2 and SHE3.

The protein resides in the bud. In terms of biological role, part of the mRNA localization machinery that restricts accumulation of certain proteins to the bud and in the daughter cell. Recruited to specific mRNAs including the ASH1 mRNA, coding for a repressor of the HO endonuclease, via its interaction with SHE3. In Saccharomyces cerevisiae (strain ATCC 204508 / S288c) (Baker's yeast), this protein is Myosin-4 (MYO4).